Reading from the N-terminus, the 124-residue chain is Fluoride-specific ion channel FluC 2 (124 aa).

4 consecutive transmembrane segments (helical) span residues 9–29 (LGIF…STWL), 34–54 (DFPW…IFLV), 67–87 (LILA…SLML), and 99–119 (FSLV…AYFL). The Na(+) site is built by Gly77 and Thr80.

The protein belongs to the fluoride channel Fluc/FEX (TC 1.A.43) family.

The protein resides in the cell membrane. The enzyme catalyses fluoride(in) = fluoride(out). Na(+) is not transported, but it plays an essential structural role and its presence is essential for fluoride channel function. Its function is as follows. Fluoride-specific ion channel. Important for reducing fluoride concentration in the cell, thus reducing its toxicity. The chain is Fluoride-specific ion channel FluC 2 from Streptococcus pneumoniae (strain ATCC BAA-255 / R6).